The sequence spans 92 residues: MKRKNASLLGNVLMGLGLVVMVVGVGYSILNQLPQFNMPQYFAHGAVLSIFVGAILWLAGARVGGHEQVCDRYWWVRHYDKRCRRSDNRRHS.

This is an uncharacterized protein from Escherichia coli O157:H7.